Consider the following 508-residue polypeptide: Protein FAM217A (508 aa).

Belongs to the FAM217 family.

The polypeptide is Protein FAM217A (FAM217A) (Homo sapiens (Human)).